The sequence spans 178 residues: Ribonuclease M5 (178 aa).

The region spanning 10–94 is the Toprim domain; that stretch reads DGVIVCEGKT…YVDMNARLKN (85 aa). Residues Glu-16, Asp-62, and Asp-64 each contribute to the Mg(2+) site.

This sequence belongs to the ribonuclease M5 family. It depends on Mg(2+) as a cofactor.

Its subcellular location is the cytoplasm. The enzyme catalyses Endonucleolytic cleavage of RNA, removing 21 and 42 nucleotides, respectively, from the 5'- and 3'-termini of a 5S-rRNA precursor.. In terms of biological role, required for correct processing of both the 5' and 3' ends of 5S rRNA precursor. Cleaves both sides of a double-stranded region yielding mature 5S rRNA in one step. This is Ribonuclease M5 (rnmV) from Mycoplasma genitalium (strain ATCC 33530 / DSM 19775 / NCTC 10195 / G37) (Mycoplasmoides genitalium).